The primary structure comprises 426 residues: Diaminobutyrate--2-oxoglutarate transaminase (426 aa).

Position 272 is an N6-(pyridoxal phosphate)lysine (Lys-272).

The protein belongs to the class-III pyridoxal-phosphate-dependent aminotransferase family. The cofactor is pyridoxal 5'-phosphate.

The catalysed reaction is L-2,4-diaminobutanoate + 2-oxoglutarate = L-aspartate 4-semialdehyde + L-glutamate. It functions in the pathway amine and polyamine biosynthesis; ectoine biosynthesis; L-ectoine from L-aspartate 4-semialdehyde: step 1/3. Functionally, catalyzes reversively the conversion of L-aspartate beta-semialdehyde (ASA) to L-2,4-diaminobutyrate (DABA) by transamination with L-glutamate. The chain is Diaminobutyrate--2-oxoglutarate transaminase (ectB) from Sporosarcina pasteurii (Bacillus pasteurii).